Here is a 281-residue protein sequence, read N- to C-terminus: CCAAT/enhancer-binding protein epsilon (281 aa).

Residues 1-30 (MSHGTYYECEPRAGQQPLEFSGARAGPGEL) form a disordered region. Residue Lys121 forms a Glycyl lysine isopeptide (Lys-Gly) (interchain with G-Cter in SUMO2) linkage. At Ser181 the chain carries Phosphoserine. Positions 204–267 (SLEYRLRRER…DTLRNLFRQI (64 aa)) constitute a bZIP domain. The basic motif stretch occupies residues 208–228 (RLRRERNNIAVRKSRDKAKRR). The interval 230–237 (LETQQKVL) is leucine-zipper.

It belongs to the bZIP family. C/EBP subfamily. As to quaternary structure, binds DNA as a homodimer and as a heterodimer. Can form stable heterodimers with CEBPA, CEBPB and CEBPD. Interacts with GATA1 and SPI1. Interacts with SMARCD2. Phosphorylated.

It localises to the nucleus. In terms of biological role, transcriptional activator. C/EBP are DNA-binding proteins that recognize two different motifs: the CCAAT homology common to many promoters and the enhanced core homology common to many enhancers. Required for the promyelocyte-myelocyte transition in myeloid differentiation. The sequence is that of CCAAT/enhancer-binding protein epsilon (CEBPE) from Ovis aries (Sheep).